Here is a 512-residue protein sequence, read N- to C-terminus: Bifunctional purine biosynthesis protein PurH (512 aa).

The MGS-like domain maps to 1-146 (MTIKRALISV…KNHQDVTVIV (146 aa)).

Belongs to the PurH family.

It catalyses the reaction (6R)-10-formyltetrahydrofolate + 5-amino-1-(5-phospho-beta-D-ribosyl)imidazole-4-carboxamide = 5-formamido-1-(5-phospho-D-ribosyl)imidazole-4-carboxamide + (6S)-5,6,7,8-tetrahydrofolate. It carries out the reaction IMP + H2O = 5-formamido-1-(5-phospho-D-ribosyl)imidazole-4-carboxamide. It functions in the pathway purine metabolism; IMP biosynthesis via de novo pathway; 5-formamido-1-(5-phospho-D-ribosyl)imidazole-4-carboxamide from 5-amino-1-(5-phospho-D-ribosyl)imidazole-4-carboxamide (10-formyl THF route): step 1/1. Its pathway is purine metabolism; IMP biosynthesis via de novo pathway; IMP from 5-formamido-1-(5-phospho-D-ribosyl)imidazole-4-carboxamide: step 1/1. The sequence is that of Bifunctional purine biosynthesis protein PurH from Bacillus subtilis (strain 168).